The primary structure comprises 507 residues: MESDEAAAVSPQATTPSGGTGASGPKKRGRKPKTKEDSQTPSSQQQSDVKMKESGKKTQQSPSVDEKYSQWKGLVPILYDWLANHNLVWPSLSCRWGPQLEQATYKNRQRLYLSEQTDGSVPNTLVIANCEVVKPRVAAAEHISQFNEEARSPFVKKYKTIIHPGEVNRIRELPQNSKIVATHTDSPDVLIWDVETQPNRHAVLGAANSRPDLILTGHQDNAEFALAMCPTEPFVLSGGKDKSVVLWSIQDHITTIGTDSKSSGSIIKQTGEGTDKNESPTVGPRGVYHGHEDTVEDVAFSPTSAQEFCSVGDDSCLILWDARTGTNPVTKVEKAHDADLHCVDWNPHDDNLILTGSADNTVRLFDRRKLTANGVGSPIYKFEGHKAAVLCVQWSPDKSSVFGSSAEDGLLNIWDYDRVSKKSDRAAKSPAGLFFQHAGHRDKVVDFHWNASDPWTIVSVSDDCETTGGGGTLQIWRMSDLIYRPEEEVVAELEKFKSHVMTCASKP.

Position 1 is an N-acetylmethionine (Met1). Positions 1-66 (MESDEAAAVS…KTQQSPSVDE (66 aa)) are disordered. WD repeat units lie at residues 95–137 (RWGP…KPRV), 162–202 (IHPG…NRHA), and 217–257 (GHQD…TTIG). Over residues 258–272 (TDSKSSGSIIKQTGE) the composition is skewed to polar residues. Residues 258-282 (TDSKSSGSIIKQTGEGTDKNESPTV) form a disordered region. WD repeat units lie at residues 290–330 (GHED…NPVT), 335–375 (AHDA…ANGV), 384–424 (GHKA…KKSD), and 439–486 (GHRD…YRPE). The DWD box motif lies at 308 to 323 (FCSVGDDSCLILWDAR).

The protein belongs to the WD repeat RBAP46/RBAP48/MSI1 family. In terms of assembly, interacts with AHL16 and HOS1. Interacts with LHP1, PDP1, PDP2 and PDP3. Component of the PRC2 (polycomb repressive complex 2) complex which regulates histone methylation on histone H3K27. In terms of tissue distribution, expressed in rosette leaves, cauline leaves, main stems and developing fruits. Expressed at higher levels in roots and flowers.

The protein localises to the nucleus. Core histone-binding subunit that may target chromatin assembly factors, chromatin remodeling factors and histone deacetylases to their histone substrates in a manner that is regulated by nucleosomal DNA. Component of the flowering autonomous pathway which positively regulates flowering by promoting transcriptional repression of the flowering repressor FLC. May promote histone deacetylation at the FLC locus leading to the formation of repressive chromatin structures. Forms a histone deacetylase complex with HDA5, HDA6 and FLD that represses FLC gene expression to control flowering time. Also negatively regulates cold-responsive genes. Acts together with PDP1 and MSI5 to regulate the function of the PRC2 complex on FLC. Required for systemic acquired resistance (SAR) toward pathogenic bacteria (e.g. Pseudomonas syringae pv tomato DC3000 (avrPto)). Together with FLD and MSI4/FVE, contributes to dehydroabietinal-dependent (DA, a diterpenoid tricyclic diterpene) activation of flowering ans SAR. The protein is WD-40 repeat-containing protein MSI4 of Arabidopsis thaliana (Mouse-ear cress).